The chain runs to 103 residues: Small ribosomal subunit protein uS10 (103 aa).

It belongs to the universal ribosomal protein uS10 family. Part of the 30S ribosomal subunit.

Functionally, involved in the binding of tRNA to the ribosomes. The sequence is that of Small ribosomal subunit protein uS10 from Magnetococcus marinus (strain ATCC BAA-1437 / JCM 17883 / MC-1).